We begin with the raw amino-acid sequence, 219 residues long: GTP-binding nuclear protein GSP1/CNR1 (219 aa).

Residue S2 is modified to N-acetylserine. The residue at position 2 (S2) is a Phosphoserine. Residues 9–173 (EVPTFKLVLV…LWLARKLAGN (165 aa)) form the Small GTPase Ran-type domain. 20 to 27 (DGGTGKTT) is a binding site for GTP. The segment at 39 to 47 (KKYIATIGV) is switch-I. GTP-binding positions include G70, 124 to 127 (NKVD), and 152 to 154 (SAK). The tract at residues 70-86 (GQEKFGGLRDGYYINAQ) is switch-II.

Belongs to the small GTPase superfamily. Ran family. Found in a nuclear export complex with RanGTP, exportin and pre-miRNA. Forms a complex with YRB1. Interacts with BUD5, CEX1, RRP12, SRM1, and DIS3/RRP44.

It localises to the nucleus. In terms of biological role, GTP-binding protein involved in nucleocytoplasmic transport. Required for the import of protein into the nucleus and also for RNA export. Essential for cell viability. By analogy with Ras, Ran may be activated when GTP is exchanged for bound GDP by RCC1 and inactivated when GTP is hydrolyzed by Ran upon activation by RanGAP1. In Saccharomyces cerevisiae (strain ATCC 204508 / S288c) (Baker's yeast), this protein is GTP-binding nuclear protein GSP1/CNR1 (GSP1).